The following is a 211-amino-acid chain: Protein G12 (211 aa).

Residues 1–19 (MKIAAFVVACLVATSAVSC) form the signal peptide.

In Anopheles gambiae (African malaria mosquito), this protein is Protein G12.